The chain runs to 246 residues: Putative 4'-phosphopantetheinyl transferase slr0495 (246 aa).

2 residues coordinate Mg(2+): D110 and E156.

This sequence belongs to the P-Pant transferase superfamily. Gsp/Sfp/HetI/AcpT family. It depends on Mg(2+) as a cofactor.

In terms of biological role, probably transfers the 4'-phosphopantetheine moiety from coenzyme A (CoA) to a serine residue of a carrier protein domain. This Synechocystis sp. (strain ATCC 27184 / PCC 6803 / Kazusa) protein is Putative 4'-phosphopantetheinyl transferase slr0495.